Consider the following 95-residue polypeptide: Protein TusB (95 aa).

It belongs to the DsrH/TusB family. In terms of assembly, heterohexamer, formed by a dimer of trimers. The hexameric TusBCD complex contains 2 copies each of TusB, TusC and TusD. The TusBCD complex interacts with TusE.

The protein localises to the cytoplasm. Part of a sulfur-relay system required for 2-thiolation of 5-methylaminomethyl-2-thiouridine (mnm(5)s(2)U) at tRNA wobble positions. The polypeptide is Protein TusB (Enterobacter sp. (strain 638)).